The sequence spans 239 residues: MEIFPAIDLKEGRCVRLYQGEFSKETVMNEDPVAQAIIFEKLGAKILHVVDLDGAIVGESVNLPVIEKICKAVRIPVQIGGGVRSLAAVEKLLSVGVEKVILGTAALYDKSFLEEAVRLYKEQIIVGIDAKNGFVATRGWLDVSEISYIDLAKQMESVGVQTIVFTDISKDGTLAGPNFEQLELLQKSVGIRVIASGGVASIQQVKRLNDMNIYGVIIGKALYEKTIDLEKVLQVTKLC.

Catalysis depends on Asp-8, which acts as the Proton acceptor. The active-site Proton donor is the Asp-129.

The protein belongs to the HisA/HisF family.

It is found in the cytoplasm. It catalyses the reaction 1-(5-phospho-beta-D-ribosyl)-5-[(5-phospho-beta-D-ribosylamino)methylideneamino]imidazole-4-carboxamide = 5-[(5-phospho-1-deoxy-D-ribulos-1-ylimino)methylamino]-1-(5-phospho-beta-D-ribosyl)imidazole-4-carboxamide. The protein operates within amino-acid biosynthesis; L-histidine biosynthesis; L-histidine from 5-phospho-alpha-D-ribose 1-diphosphate: step 4/9. The polypeptide is 1-(5-phosphoribosyl)-5-[(5-phosphoribosylamino)methylideneamino] imidazole-4-carboxamide isomerase (Bacillus mycoides (strain KBAB4) (Bacillus weihenstephanensis)).